We begin with the raw amino-acid sequence, 438 residues long: Trigger factor (438 aa).

The PPIase FKBP-type domain maps to 160-245 (DDKVTIDFVG…VKKIQQAELP (86 aa)).

This sequence belongs to the FKBP-type PPIase family. Tig subfamily.

It is found in the cytoplasm. It catalyses the reaction [protein]-peptidylproline (omega=180) = [protein]-peptidylproline (omega=0). In terms of biological role, involved in protein export. Acts as a chaperone by maintaining the newly synthesized protein in an open conformation. Functions as a peptidyl-prolyl cis-trans isomerase. This Francisella tularensis subsp. holarctica (strain OSU18) protein is Trigger factor.